Here is a 405-residue protein sequence, read N- to C-terminus: L-rhamnonate dehydratase (405 aa).

The substrate site is built by His33 and Arg59. The Mg(2+) site is built by Asp226, Glu252, and Glu280. The active-site Proton acceptor is His329. Residue Glu349 participates in substrate binding.

The protein belongs to the mandelate racemase/muconate lactonizing enzyme family. RhamD subfamily. In terms of assembly, homooctamer; tetramer of dimers. Requires Mg(2+) as cofactor.

The catalysed reaction is L-rhamnonate = 2-dehydro-3-deoxy-L-rhamnonate + H2O. Catalyzes the dehydration of L-rhamnonate to 2-keto-3-deoxy-L-rhamnonate (KDR). Can also dehydrate L-lyxonate and L-mannonate, although less efficiently, but not 2-keto-4-hydroxyheptane-1,7-dioate. The polypeptide is L-rhamnonate dehydratase (rhmD) (Salmonella typhimurium (strain LT2 / SGSC1412 / ATCC 700720)).